Consider the following 361-residue polypeptide: Histidinol-phosphate aminotransferase (361 aa).

K219 bears the N6-(pyridoxal phosphate)lysine mark.

Belongs to the class-II pyridoxal-phosphate-dependent aminotransferase family. Histidinol-phosphate aminotransferase subfamily. Homodimer. Requires pyridoxal 5'-phosphate as cofactor.

The enzyme catalyses L-histidinol phosphate + 2-oxoglutarate = 3-(imidazol-4-yl)-2-oxopropyl phosphate + L-glutamate. It participates in amino-acid biosynthesis; L-histidine biosynthesis; L-histidine from 5-phospho-alpha-D-ribose 1-diphosphate: step 7/9. The chain is Histidinol-phosphate aminotransferase from Acinetobacter baumannii (strain SDF).